The following is a 940-amino-acid chain: Phosphoenolpyruvate carboxylase (940 aa).

Residues His138 and Lys603 contribute to the active site.

The protein belongs to the PEPCase type 1 family. The cofactor is Mg(2+).

It catalyses the reaction oxaloacetate + phosphate = phosphoenolpyruvate + hydrogencarbonate. Forms oxaloacetate, a four-carbon dicarboxylic acid source for the tricarboxylic acid cycle. The protein is Phosphoenolpyruvate carboxylase of Streptococcus thermophilus (strain ATCC BAA-250 / LMG 18311).